A 135-amino-acid chain; its full sequence is Hexon-associated protein (135 aa).

A propeptide spanning residues 1-19 is cleaved from the precursor; that stretch reads RDAQAEVQMTNAGVQLAGG.

The protein belongs to the adenoviridae pVIII family.

The sequence is that of Hexon-associated protein (PVIII) from Homo sapiens (Human).